Reading from the N-terminus, the 518-residue chain is Glutamate--cysteine ligase (518 aa).

The protein belongs to the glutamate--cysteine ligase type 1 family. Type 1 subfamily.

The catalysed reaction is L-cysteine + L-glutamate + ATP = gamma-L-glutamyl-L-cysteine + ADP + phosphate + H(+). Its pathway is sulfur metabolism; glutathione biosynthesis; glutathione from L-cysteine and L-glutamate: step 1/2. The chain is Glutamate--cysteine ligase from Escherichia fergusonii (strain ATCC 35469 / DSM 13698 / CCUG 18766 / IAM 14443 / JCM 21226 / LMG 7866 / NBRC 102419 / NCTC 12128 / CDC 0568-73).